The chain runs to 264 residues: uncharacterized protein (264 aa).

The signal sequence occupies residues 1–22 (MKSIKRIGLCISLLILIIFVTS). Cysteine 23 carries the N-palmitoyl cysteine lipid modification. Cysteine 23 carries the S-diacylglycerol cysteine lipid modification.

Belongs to the staphylococcal tandem lipoprotein family.

It localises to the cell membrane. This is an uncharacterized protein from Staphylococcus aureus (strain MRSA252).